A 357-amino-acid polypeptide reads, in one-letter code: Heat-inducible transcription repressor HrcA (357 aa).

It belongs to the HrcA family.

Its function is as follows. Negative regulator of class I heat shock genes (grpE-dnaK-dnaJ and groELS operons). Prevents heat-shock induction of these operons. In Ureaplasma parvum serovar 3 (strain ATCC 27815 / 27 / NCTC 11736), this protein is Heat-inducible transcription repressor HrcA.